Here is an 872-residue protein sequence, read N- to C-terminus: DNA mismatch repair protein MutS (872 aa).

626-633 contacts ATP; that stretch reads GPNMAGKS.

The protein belongs to the DNA mismatch repair MutS family.

Functionally, this protein is involved in the repair of mismatches in DNA. It is possible that it carries out the mismatch recognition step. This protein has a weak ATPase activity. This Chlorobium phaeobacteroides (strain DSM 266 / SMG 266 / 2430) protein is DNA mismatch repair protein MutS.